Here is a 64-residue protein sequence, read N- to C-terminus: DNA-directed RNA polymerase subunit Rpo10 (64 aa).

Residues Cys-7, Cys-10, Cys-45, and Cys-46 each contribute to the Zn(2+) site.

It belongs to the archaeal Rpo10/eukaryotic RPB10 RNA polymerase subunit family. Part of the RNA polymerase complex. It depends on Zn(2+) as a cofactor.

It localises to the cytoplasm. It carries out the reaction RNA(n) + a ribonucleoside 5'-triphosphate = RNA(n+1) + diphosphate. DNA-dependent RNA polymerase (RNAP) catalyzes the transcription of DNA into RNA using the four ribonucleoside triphosphates as substrates. In Halorubrum lacusprofundi (strain ATCC 49239 / DSM 5036 / JCM 8891 / ACAM 34), this protein is DNA-directed RNA polymerase subunit Rpo10.